A 56-amino-acid polypeptide reads, in one-letter code: Small ribosomal subunit protein uS14 (56 aa).

Zn(2+) is bound by residues Cys-21, Cys-24, Cys-39, and Cys-42.

Belongs to the universal ribosomal protein uS14 family. As to quaternary structure, component of the small ribosomal subunit (SSU). Mature N.crassa ribosomes consist of a small (40S) and a large (60S) subunit. The 40S small subunit contains 1 molecule of ribosomal RNA (18S rRNA) and at least 32 different proteins. The large 60S subunit contains 3 rRNA molecules (26S, 5.8S and 5S rRNA) and at least 42 different proteins. Zn(2+) is required as a cofactor.

The protein resides in the cytoplasm. In terms of biological role, component of the ribosome, a large ribonucleoprotein complex responsible for the synthesis of proteins in the cell. The small ribosomal subunit (SSU) binds messenger RNAs (mRNAs) and translates the encoded message by selecting cognate aminoacyl-transfer RNA (tRNA) molecules. The large subunit (LSU) contains the ribosomal catalytic site termed the peptidyl transferase center (PTC), which catalyzes the formation of peptide bonds, thereby polymerizing the amino acids delivered by tRNAs into a polypeptide chain. The nascent polypeptides leave the ribosome through a tunnel in the LSU and interact with protein factors that function in enzymatic processing, targeting, and the membrane insertion of nascent chains at the exit of the ribosomal tunnel. This is Small ribosomal subunit protein uS14 (rps-29) from Neurospora crassa (strain ATCC 24698 / 74-OR23-1A / CBS 708.71 / DSM 1257 / FGSC 987).